The following is a 323-amino-acid chain: Phosphoribosylformylglycinamidine cyclo-ligase (323 aa).

It belongs to the AIR synthase family.

Its subcellular location is the cytoplasm. It carries out the reaction 2-formamido-N(1)-(5-O-phospho-beta-D-ribosyl)acetamidine + ATP = 5-amino-1-(5-phospho-beta-D-ribosyl)imidazole + ADP + phosphate + H(+). The protein operates within purine metabolism; IMP biosynthesis via de novo pathway; 5-amino-1-(5-phospho-D-ribosyl)imidazole from N(2)-formyl-N(1)-(5-phospho-D-ribosyl)glycinamide: step 2/2. This is Phosphoribosylformylglycinamidine cyclo-ligase from Saccharolobus solfataricus (strain ATCC 35092 / DSM 1617 / JCM 11322 / P2) (Sulfolobus solfataricus).